The following is a 97-amino-acid chain: Serine protease inhibitor Kazal-type 8 (97 aa).

Positions 1–21 are cleaved as a signal peptide; the sequence is MKGICSDAILVLATSMWMAFA. Residues 36–96 enclose the Kazal-like domain; that stretch reads DKTIVECLKN…TKLYDGQCEN (61 aa). Cystine bridges form between C42–C76, C49–C73, and C62–C94. N85 carries N-linked (GlcNAc...) asparagine glycosylation.

The protein resides in the secreted. In terms of biological role, probable serine protease inhibitor. This is Serine protease inhibitor Kazal-type 8 (SPINK8) from Homo sapiens (Human).